Reading from the N-terminus, the 613-residue chain is Activating transcription factor 3 (613 aa).

2 disordered regions span residues 77–115 and 133–218; these read RHFN…PSVQ and KRKL…NKIA. Residues 85–105 show a composition bias toward low complexity; sequence GQSHSQDSSHSSCSGSPLDSP. Residues 138–147 show a composition bias toward polar residues; that stretch reads TCDSSSGSEQ. Residues 158–175 show a composition bias toward low complexity; sequence NHNGHSGSSNNYSGSMSN. Positions 178-191 are enriched in acidic residues; it reads DLDDDCEESSDDDS. Residues 205–268 form the bZIP domain; sequence EDRRRRRRER…QKLVDMLKSH (64 aa). A basic motif region spans residues 207–229; the sequence is RRRRRRERNKIAATKCRMKKRER. The segment at 233–261 is leucine-zipper; it reads LIKESEVLDTQNVELKNQVRQLETERQKL. Residues 337-446 form a disordered region; it reads PNGYCKPSPS…SSNATSSTTP (110 aa). Low complexity predominate over residues 356-368; it reads QQQQQQQQQQQPQ. The span at 369–389 shows a compositional bias: polar residues; sequence SLNPAGNNVIDQQHANPSPSL. The segment covering 402-446 has biased composition (low complexity); the sequence is GSASNHPSHNNNNNNNNSSGASSNTSNNNSNISSHSSNATSSTTP.

The protein belongs to the bZIP family. ATF subfamily. As to quaternary structure, interacts with Jra/jun; the interaction enhances the DNA-binding activity of Atf3. As to expression, moderate expression in some regions of the larval nervous system, the ring gland and imaginal disks. High expression in larval gut, excretory malpighian tubules, salivary glands, and, to a lesser extent, the fat body where levels are approximately 2.5-fold less than the gut.

The protein resides in the nucleus. Transcription factor which binds to the cAMP response element (CRE). Regulates metabolic and innate immune homeostasis, possibly by controlling appropriate expression of genes involved in peritrophic matrix composition and ensuring the normal digestive and immune function of the gut. Required for the expression of odorant receptors Or43b and Or47b. The polypeptide is Activating transcription factor 3 (Drosophila melanogaster (Fruit fly)).